The sequence spans 230 residues: Protein-L-isoaspartate O-methyltransferase (230 aa).

Serine 68 is an active-site residue.

It belongs to the methyltransferase superfamily. L-isoaspartyl/D-aspartyl protein methyltransferase family.

It is found in the cytoplasm. The enzyme catalyses [protein]-L-isoaspartate + S-adenosyl-L-methionine = [protein]-L-isoaspartate alpha-methyl ester + S-adenosyl-L-homocysteine. Its function is as follows. Catalyzes the methyl esterification of L-isoaspartyl residues in peptides and proteins that result from spontaneous decomposition of normal L-aspartyl and L-asparaginyl residues. It plays a role in the repair and/or degradation of damaged proteins. The protein is Protein-L-isoaspartate O-methyltransferase of Salinibacter ruber (strain DSM 13855 / M31).